A 94-amino-acid polypeptide reads, in one-letter code: Cell division topological specificity factor (94 aa).

Belongs to the MinE family.

In terms of biological role, prevents the cell division inhibition by proteins MinC and MinD at internal division sites while permitting inhibition at polar sites. This ensures cell division at the proper site by restricting the formation of a division septum at the midpoint of the long axis of the cell. The sequence is that of Cell division topological specificity factor from Beijerinckia indica subsp. indica (strain ATCC 9039 / DSM 1715 / NCIMB 8712).